The primary structure comprises 124 residues: Large ribosomal subunit protein bL19 (124 aa).

It belongs to the bacterial ribosomal protein bL19 family.

Its function is as follows. This protein is located at the 30S-50S ribosomal subunit interface and may play a role in the structure and function of the aminoacyl-tRNA binding site. The protein is Large ribosomal subunit protein bL19 of Cereibacter sphaeroides (strain ATCC 17029 / ATH 2.4.9) (Rhodobacter sphaeroides).